The following is a 1053-amino-acid chain: DNA-directed RNA polymerase subunit beta' (1053 aa).

Zn(2+) is bound by residues Cys60, Cys62, Cys75, and Cys78. Asp449, Asp451, and Asp453 together coordinate Mg(2+).

It belongs to the RNA polymerase beta' chain family. In terms of assembly, the RNAP catalytic core consists of 2 alpha, 1 beta, 1 beta' and 1 omega subunit. When a sigma factor is associated with the core the holoenzyme is formed, which can initiate transcription. Mg(2+) serves as cofactor. Zn(2+) is required as a cofactor.

The enzyme catalyses RNA(n) + a ribonucleoside 5'-triphosphate = RNA(n+1) + diphosphate. Functionally, DNA-dependent RNA polymerase catalyzes the transcription of DNA into RNA using the four ribonucleoside triphosphates as substrates. This is DNA-directed RNA polymerase subunit beta' from Brochothrix thermosphacta (Microbacterium thermosphactum).